Consider the following 163-residue polypeptide: Photosystem II extrinsic protein V (163 aa).

Positions 1-26 (MLRKLILITVATVFFACQLLVNPVSA) are cleaved as a signal peptide. Heme c is bound by residues Cys63, Cys66, His67, and His118.

It belongs to the cytochrome c family. PsbV subfamily. As to quaternary structure, PSII is composed of 1 copy each of membrane proteins PsbA, PsbB, PsbC, PsbD, PsbE, PsbF, PsbH, PsbI, PsbJ, PsbK, PsbL, PsbM, PsbT, PsbX, PsbY, PsbZ, Psb30/Ycf12, peripheral proteins PsbO, CyanoQ (PsbQ), PsbU, PsbV and a large number of cofactors. It forms dimeric complexes. It depends on heme c as a cofactor.

Its subcellular location is the cellular thylakoid membrane. Its function is as follows. One of the extrinsic, lumenal subunits of photosystem II (PSII). PSII is a light-driven water plastoquinone oxidoreductase, using light energy to abstract electrons from H(2)O, generating a proton gradient subsequently used for ATP formation. The extrinsic proteins stabilize the structure of photosystem II oxygen-evolving complex (OEC), the ion environment of oxygen evolution and protect the OEC against heat-induced inactivation. Low-potential cytochrome c that plays a role in the OEC of PSII. The chain is Photosystem II extrinsic protein V from Aphanothece halophytica.